Consider the following 76-residue polypeptide: Small ribosomal subunit protein bS18 (76 aa).

This sequence belongs to the bacterial ribosomal protein bS18 family. Part of the 30S ribosomal subunit. Forms a tight heterodimer with protein bS6.

Binds as a heterodimer with protein bS6 to the central domain of the 16S rRNA, where it helps stabilize the platform of the 30S subunit. The chain is Small ribosomal subunit protein bS18 from Psychrobacter arcticus (strain DSM 17307 / VKM B-2377 / 273-4).